The primary structure comprises 364 residues: Probable dual-specificity RNA methyltransferase RlmN (364 aa).

The Proton acceptor role is filled by Glu106. One can recognise a Radical SAM core domain in the interval 112–350; the sequence is YPRRNTVCIS…SCTVRDTRGR (239 aa). Cys119 and Cys356 form a disulfide bridge. Residues Cys126, Cys130, and Cys133 each contribute to the [4Fe-4S] cluster site. S-adenosyl-L-methionine is bound by residues 177-178, Ser211, 234-236, and Asn313; these read GE and SLH. Catalysis depends on Cys356, which acts as the S-methylcysteine intermediate.

The protein belongs to the radical SAM superfamily. RlmN family. [4Fe-4S] cluster is required as a cofactor.

It is found in the cytoplasm. The catalysed reaction is adenosine(2503) in 23S rRNA + 2 reduced [2Fe-2S]-[ferredoxin] + 2 S-adenosyl-L-methionine = 2-methyladenosine(2503) in 23S rRNA + 5'-deoxyadenosine + L-methionine + 2 oxidized [2Fe-2S]-[ferredoxin] + S-adenosyl-L-homocysteine. The enzyme catalyses adenosine(37) in tRNA + 2 reduced [2Fe-2S]-[ferredoxin] + 2 S-adenosyl-L-methionine = 2-methyladenosine(37) in tRNA + 5'-deoxyadenosine + L-methionine + 2 oxidized [2Fe-2S]-[ferredoxin] + S-adenosyl-L-homocysteine. Its function is as follows. Specifically methylates position 2 of adenine 2503 in 23S rRNA and position 2 of adenine 37 in tRNAs. The chain is Probable dual-specificity RNA methyltransferase RlmN from Mycobacterium bovis (strain ATCC BAA-935 / AF2122/97).